The primary structure comprises 143 residues: Hemoglobin subunit alpha (143 aa).

Ser2 carries the N-acetylserine modification. The region spanning 2 to 143 (SLSDKDKAAV…VALALAEKYR (142 aa)) is the Globin domain. His60 provides a ligand contact to O2. His89 is a heme b binding site.

The protein belongs to the globin family. In terms of assembly, heterotetramer of two alpha chains and two beta chains. In terms of tissue distribution, red blood cells.

In terms of biological role, involved in oxygen transport from the lung to the various peripheral tissues. This Artedidraco orianae (Barbeled plunderfish) protein is Hemoglobin subunit alpha (hba).